The sequence spans 1055 residues: Ubiquitin carboxyl-terminal hydrolase 25 (1055 aa).

The UBA-like domain occupies 14–57 (QKHQQTFLNQLREITGINDTQILQQALKDSNGNLELAVAFLTAK). The segment at 77-102 (NDRYISVGSQADTNVIDLTGDDKDDL) is SUMO interaction domain (SIM). Phosphoserine is present on Ser85. Positions 89-95 (TNVIDLT) match the Required for SUMO paralog-specific binding motif. 2 UIM domains span residues 97–116 (DDKD…SNRA) and 123–140 (TDEE…IAEN). A Glycyl lysine isopeptide (Lys-Gly) (interchain with G-Cter in SUMO); alternate cross-link involves residue Lys99. Lys99 is covalently cross-linked (Glycyl lysine isopeptide (Lys-Gly) (interchain with G-Cter in ubiquitin); alternate). The 489-residue stretch at 169–657 (VGLKNVGNTC…SAYCLMYIND (489 aa)) folds into the USP domain. Cys178 is a catalytic residue. The tract at residues 464-507 (VCTSPVDDIDASSPPSGSIPSQTLPSTTEQQGALSSELPSTSPS) is disordered. Residues 476-496 (SPPSGSIPSQTLPSTTEQQGA) are compositionally biased toward polar residues. The span at 497–507 (LSSELPSTSPS) shows a compositional bias: low complexity. Residues 541–578 (TEEELSVLESCLHRWRTEIENDTRDLQESISRIHRTIE) adopt a coiled-coil conformation. Active-site residues include His599 and His607. Residues 684-717 (DLRDFVEEDNQRFEKELEEWDAQLAQKALQEKLL) adopt a coiled-coil conformation. The segment at 727–749 (TSVTTAQAAGDPEYLEQPSRSDF) is disordered. Tyr740 is subject to Phosphotyrosine.

The protein belongs to the peptidase C19 family. Homotetramer, inhibited form. Homodimer, active form. Interacts with ACTA1 (via its C-terminus); the interaction occurs for all isoforms but is strongest for isoform USP25m in muscle differentiating cells. Interacts (isoform USP25m only) with MYBPC1; the interaction prevents proteasomal degradation of MYBPC1. Interacts (isoform USP25m only) with FLNC (via filament repeats 17-18, 20-21 and 24). Interacts with GAPDH. Interacts with SUMO3; the interaction sumoylates efficiently USP25. Interacts with SUMO2; the interaction sumoylates efficiently USP25. Interacts with SUMO1; the interaction only weakly sumoylates USP25. Interacts with SYK; phosphorylates USP25 and regulates USP25 intracellular levels. In terms of processing, acetylated. Sumoylation impairs binding to and hydrolysis of ubiquitin chains. Sumoylated preferentially with SUMO2 or SUMO3. Desumoylated by SENP1. Polyubiquitinated by SMURF1 by promoting the 'Lys-48'-linkage leading to proteasomal degradation. Post-translationally, preferentially monoubiquitinated but can also be polyubiquitinated. Autodeubiquitinated. Ubiquitination activates the enzymatic activity either by preventing sumoylation or by allowing novel interactions. In terms of processing, phosphorylation in the C-terminal by SYK regulates USP25 cellular levels. As to expression, isoform USP25a is found in most adult and fetal tissues; expression is moderately high in testis, pancreas, kidney, skeletal muscle, liver, lung, placenta, heart, but very low in peripheral blood, colon, small intestine, ovary, prostate, thymus and spleen. Expressed in the brain, with high levels in the cerebral cortex. Isoform USP25b is found in all tissues except heart and skeletal muscle. Isoform USP25m is heart and skeletal muscle specific.

Its subcellular location is the cytoplasm. It localises to the nucleus. The enzyme catalyses Thiol-dependent hydrolysis of ester, thioester, amide, peptide and isopeptide bonds formed by the C-terminal Gly of ubiquitin (a 76-residue protein attached to proteins as an intracellular targeting signal).. Functionally, deubiquitinating enzyme that hydrolyzes ubiquitin moieties conjugated to substrates and thus, functions in various biological processes including inflammation and immune response. Modulates the Wnt/beta-catenin pathway by deubiquitinating and stabilizing tankyrases TNKS1 and TNKS2. Regulates KEAP1-NRF2 axis in the defense against oxidative assaults by deubiquitinating KEAP1 and protecting it from degradation leading to degradation of the NRF2 transcription factor that is responsible for mounting an anti-oxidation gene expression program. Positively regulates RNA virus-induced innate signaling by interacting with and deubiquitinating ERLIN1 and ERLIN2. In turn, restricts virus production by regulating cholesterol biosynthetic flux. Acts as a negative regulator of interleukin-17-mediated signaling and inflammation through the removal of 'Lys-63'-linked ubiquitination of TRAF5 and TRAF6. Prevents the ubiquitination and degradation of TRAF3 to reduce the phosphorylation levels of JNK and P38, the secretion of IL-1B and to induce endotoxin tolerance. Its function is as follows. The muscle-specific isoform (USP25m) may have a role in the regulation of muscular differentiation and function. The protein is Ubiquitin carboxyl-terminal hydrolase 25 (USP25) of Homo sapiens (Human).